Reading from the N-terminus, the 655-residue chain is FYVE, RhoGEF and PH domain-containing protein 2 (655 aa).

3 positions are modified to phosphoserine: Ser-10, Ser-39, and Ser-47. 2 disordered regions span residues 21–52 and 84–103; these read NRTP…EPWE and WRRS…EPEE. The segment covering 32-41 has biased composition (basic and acidic residues); the sequence is SLEDQPHSPE. A DH domain is found at 102 to 290; sequence EEKRVVRELL…FSAAQHSNAA (189 aa). The PH 1 domain maps to 319–418; sequence TLLREGPVLK…WMQACQAAID (100 aa). The FYVE-type zinc-finger motif lies at 458–518; it reads DKMVTMCMRC…VCLTCYTFLT (61 aa). The Zn(2+) site is built by Cys-464, Cys-467, Cys-481, Cys-484, Cys-489, Cys-492, Cys-510, and Cys-513. One can recognise a PH 2 domain in the interval 544–641; that stretch reads QSLVCSFLQL…WVTAIKRAAS (98 aa). Residue Thr-644 is modified to Phosphothreonine. A Phosphoserine modification is found at Ser-654.

As to expression, lymph node, spleen, B-lymphocytes and macrophages (at protein level). Expressed at high levels in lymph node, spleen, B-lymphocytes and bone marrow macrophages. Expressed at lower levels in mature bone marrow dendritic cells. In both immature and mature B-cells, expression is down-regulated by prior B-cell receptor signaling. Expression remains high in resting B and memory cells but declines upon differentiation into plasma cells.

The protein resides in the cytoplasm. It localises to the nucleus. Its subcellular location is the early endosome. It is found in the early endosome membrane. The protein localises to the cell projection. The protein resides in the ruffle membrane. It localises to the cytoskeleton. Its function is as follows. Activates CDC42, a member of the Ras-like family of Rho- and Rac proteins, by exchanging bound GDP for free GTP. Activates JNK1 via CDC42 but not RAC1. Binds to phosphatidylinositol 4,5-bisphosphate, phosphatidylinositol 3,4,5-trisphosphate, phosphatidylinositol 5-monophosphate, phosphatidylinositol 4-monophosphate and phosphatidylinositol 3-monophosphate. In Mus musculus (Mouse), this protein is FYVE, RhoGEF and PH domain-containing protein 2 (Fgd2).